Here is a 350-residue protein sequence, read N- to C-terminus: Protein RecA (350 aa).

ATP is bound at residue 67–74; the sequence is GPESSGKT.

The protein belongs to the RecA family.

It is found in the cytoplasm. Its function is as follows. Can catalyze the hydrolysis of ATP in the presence of single-stranded DNA, the ATP-dependent uptake of single-stranded DNA by duplex DNA, and the ATP-dependent hybridization of homologous single-stranded DNAs. It interacts with LexA causing its activation and leading to its autocatalytic cleavage. The sequence is that of Protein RecA from Chlamydia caviae (strain ATCC VR-813 / DSM 19441 / 03DC25 / GPIC) (Chlamydophila caviae).